Reading from the N-terminus, the 329-residue chain is Phosphate acyltransferase (329 aa).

The protein belongs to the PlsX family. In terms of assembly, homodimer. Probably interacts with PlsY.

It localises to the cytoplasm. It catalyses the reaction a fatty acyl-[ACP] + phosphate = an acyl phosphate + holo-[ACP]. It participates in lipid metabolism; phospholipid metabolism. Functionally, catalyzes the reversible formation of acyl-phosphate (acyl-PO(4)) from acyl-[acyl-carrier-protein] (acyl-ACP). This enzyme utilizes acyl-ACP as fatty acyl donor, but not acyl-CoA. This chain is Phosphate acyltransferase, found in Geobacillus sp. (strain WCH70).